Reading from the N-terminus, the 307-residue chain is MINKDIYQALQQLIPNEKIKVDEPLKRYTYTKTGGNADFYITPTKNEEVQAVVKYAYQNEIPVTYLGNGSNIIIREGGIRGIVISLLSLDHIEVSDDAIIAGSGAAIIDVSRVALDYALTGLEFACGIPGSIGGAVYMNAGAYGGEVKDCIDYALCVNEQGSLIKLTTKELELDYRNSIIQKEHLVVLEAAFTLAPGKMTEIQAKMDDLTERRESKQPLEYPSCGSVFQRPPGHFAGKLIQDSNLQGHRIGGVEVSTKHAGFMVNVDNGTATDYENLIHYVQKTVKEKFGIELNREVRIIGEHPKES.

Positions 33 to 197 (TGGNADFYIT…LEAAFTLAPG (165 aa)) constitute an FAD-binding PCMH-type domain. Residue Arg-176 is part of the active site. The active-site Proton donor is Ser-226. Residue Glu-296 is part of the active site.

It belongs to the MurB family. It depends on FAD as a cofactor.

It localises to the cytoplasm. The enzyme catalyses UDP-N-acetyl-alpha-D-muramate + NADP(+) = UDP-N-acetyl-3-O-(1-carboxyvinyl)-alpha-D-glucosamine + NADPH + H(+). The protein operates within cell wall biogenesis; peptidoglycan biosynthesis. In terms of biological role, cell wall formation. In Staphylococcus aureus (strain COL), this protein is UDP-N-acetylenolpyruvoylglucosamine reductase.